Consider the following 268-residue polypeptide: Shikimate dehydrogenase (NADP(+)) (268 aa).

Shikimate-binding positions include Ser-15–Ser-17 and Thr-60. Catalysis depends on Lys-64, which acts as the Proton acceptor. 2 residues coordinate shikimate: Asn-85 and Asp-101. NADP(+) contacts are provided by residues Gly-121–Ser-125 and Leu-208. Tyr-210 is a shikimate binding site. Position 230 (Gly-230) interacts with NADP(+).

It belongs to the shikimate dehydrogenase family. In terms of assembly, homodimer.

The enzyme catalyses shikimate + NADP(+) = 3-dehydroshikimate + NADPH + H(+). Its pathway is metabolic intermediate biosynthesis; chorismate biosynthesis; chorismate from D-erythrose 4-phosphate and phosphoenolpyruvate: step 4/7. Its function is as follows. Involved in the biosynthesis of the chorismate, which leads to the biosynthesis of aromatic amino acids. Catalyzes the reversible NADPH linked reduction of 3-dehydroshikimate (DHSA) to yield shikimate (SA). The polypeptide is Shikimate dehydrogenase (NADP(+)) (Helicobacter hepaticus (strain ATCC 51449 / 3B1)).